We begin with the raw amino-acid sequence, 97 residues long: YcgL domain-containing protein PP_4590 (97 aa).

The YcgL domain maps to 3 to 87 (RICSIYKSPR…LEDEYIEHLP (85 aa)).

The chain is YcgL domain-containing protein PP_4590 from Pseudomonas putida (strain ATCC 47054 / DSM 6125 / CFBP 8728 / NCIMB 11950 / KT2440).